The following is a 117-amino-acid chain: Aspartate 1-decarboxylase (117 aa).

The active-site Schiff-base intermediate with substrate; via pyruvic acid is the Ser25. Ser25 is modified (pyruvic acid (Ser)). Position 57 (Thr57) interacts with substrate. Catalysis depends on Tyr58, which acts as the Proton donor. Residue 73–75 participates in substrate binding; it reads GAA.

The protein belongs to the PanD family. Heterooctamer of four alpha and four beta subunits. Pyruvate serves as cofactor. Post-translationally, is synthesized initially as an inactive proenzyme, which is activated by self-cleavage at a specific serine bond to produce a beta-subunit with a hydroxyl group at its C-terminus and an alpha-subunit with a pyruvoyl group at its N-terminus.

It localises to the cytoplasm. The catalysed reaction is L-aspartate + H(+) = beta-alanine + CO2. Its pathway is cofactor biosynthesis; (R)-pantothenate biosynthesis; beta-alanine from L-aspartate: step 1/1. Catalyzes the pyruvoyl-dependent decarboxylation of aspartate to produce beta-alanine. The sequence is that of Aspartate 1-decarboxylase from Thermoanaerobacter pseudethanolicus (strain ATCC 33223 / 39E) (Clostridium thermohydrosulfuricum).